Consider the following 362-residue polypeptide: 3-dehydroquinate synthase (362 aa).

Residues 71-76 (DGEQYK), 105-109 (GVIGD), 129-130 (TT), K142, K151, and 169-172 (CLST) each bind NAD(+). Zn(2+)-binding residues include E184, H247, and H264.

The protein belongs to the sugar phosphate cyclases superfamily. Dehydroquinate synthase family. Co(2+) serves as cofactor. It depends on Zn(2+) as a cofactor. NAD(+) is required as a cofactor.

Its subcellular location is the cytoplasm. The enzyme catalyses 7-phospho-2-dehydro-3-deoxy-D-arabino-heptonate = 3-dehydroquinate + phosphate. It functions in the pathway metabolic intermediate biosynthesis; chorismate biosynthesis; chorismate from D-erythrose 4-phosphate and phosphoenolpyruvate: step 2/7. Catalyzes the conversion of 3-deoxy-D-arabino-heptulosonate 7-phosphate (DAHP) to dehydroquinate (DHQ). In Vibrio atlanticus (strain LGP32) (Vibrio splendidus (strain Mel32)), this protein is 3-dehydroquinate synthase.